The sequence spans 129 residues: Large ribosomal subunit protein eL32 (129 aa).

It belongs to the eukaryotic ribosomal protein eL32 family.

This is Large ribosomal subunit protein eL32 (rpl32e) from Archaeoglobus fulgidus (strain ATCC 49558 / DSM 4304 / JCM 9628 / NBRC 100126 / VC-16).